The following is a 270-amino-acid chain: uncharacterized protein (270 aa).

This is an uncharacterized protein from Bacillus subtilis (strain 168).